The following is a 315-amino-acid chain: Ribosomal protein L11 methyltransferase (315 aa).

Residues Thr163, Gly185, Asp207, and Asn249 each contribute to the S-adenosyl-L-methionine site.

Belongs to the methyltransferase superfamily. PrmA family.

It localises to the cytoplasm. The enzyme catalyses L-lysyl-[protein] + 3 S-adenosyl-L-methionine = N(6),N(6),N(6)-trimethyl-L-lysyl-[protein] + 3 S-adenosyl-L-homocysteine + 3 H(+). In terms of biological role, methylates ribosomal protein L11. The protein is Ribosomal protein L11 methyltransferase of Lactobacillus helveticus (strain DPC 4571).